The following is a 488-amino-acid chain: Protein unzipped (488 aa).

Residues 1 to 21 (MTSNSCLISLGLLLVLIQILA) form the signal peptide. Residues 22-465 (PAKAAEHSVF…DVALAGFGVN (444 aa)) are Extracellular-facing. N-linked (GlcNAc...) asparagine glycosylation is found at Asn-35, Asn-232, Asn-317, and Asn-374. The segment covering 380 to 400 (TTTTTTTTSTSTTTHATTTST) has biased composition (low complexity). A disordered region spans residues 380 to 453 (TTTTTTTTST…EAPENMSSDP (74 aa)). Residue Asn-448 is glycosylated (N-linked (GlcNAc...) asparagine). The chain crosses the membrane as a helical span at residues 466 to 486 (AAGSTFIAGSALLTLLLTIFL). The Cytoplasmic portion of the chain corresponds to 487 to 488 (SL).

The protein resides in the membrane. In terms of biological role, required for normal axon patterning during neurogenesis. The chain is Protein unzipped (uzip) from Drosophila melanogaster (Fruit fly).